Consider the following 444-residue polypeptide: Orexin receptor type 2 (444 aa).

Basic and acidic residues predominate over residues 1–10 (MSGTKLEDSP). The interval 1–30 (MSGTKLEDSPPCRNWSSAPELNETQEPFLN) is disordered. Over 1–54 (MSGTKLEDSPPCRNWSSAPELNETQEPFLNPTDYDDEEFLRYLWREYLHPKEYE) the chain is Extracellular. N-linked (GlcNAc...) asparagine glycosylation is found at asparagine 14 and asparagine 22. The segment covering 14–27 (NWSSAPELNETQEP) has biased composition (polar residues). Positions 33–49 (DYDDEEFLRYLWREYLH) are required for response to orexin-A. Residues 55 to 75 (WVLIAGYIIVFVVALVGNVLV) traverse the membrane as a helical segment. Over 76–88 (CVAVWKNHHMRTV) the chain is Cytoplasmic. A helical membrane pass occupies residues 89-110 (TNYFIVNLSLADVLVTITCLPA). Over 111-127 (TLVVDITETWFFGQSLC) the chain is Extracellular. Cysteines 127 and 210 form a disulfide. Residues 128–150 (KVIPYLQTVSVSVSVLTLSCIAL) form a helical membrane-spanning segment. The Cytoplasmic segment spans residues 151-170 (DRWYAICHPLMFKSTAKRAR). A helical membrane pass occupies residues 171–191 (NSIVIIWIVSCIIMIPQAIVM). Topologically, residues 192–222 (ECSTMLPGLANKTTLFTVCDERWGGEIYPKM) are extracellular. The N-linked (GlcNAc...) asparagine glycan is linked to asparagine 202. A helical transmembrane segment spans residues 223–243 (YHICFFLVTYMAPLCLMVLAY). The Cytoplasmic segment spans residues 244–304 (LQIFRKLWCR…QIRARRKTAR (61 aa)). The chain crosses the membrane as a helical span at residues 305–326 (MLMVVLLVFAICYLPISILNVL). Residues 327 to 342 (KRVFGMFTHTEDRETV) lie on the Extracellular side of the membrane. The helical transmembrane segment at 343-366 (YAWFTFSHWLVYANSAANPIIYNF) threads the bilayer. The Cytoplasmic portion of the chain corresponds to 367–444 (LSGKFREEFK…ANGAGPLQNW (78 aa)).

The protein belongs to the G-protein coupled receptor 1 family.

It localises to the cell membrane. In terms of biological role, nonselective, high-affinity receptor for both orexin-A and orexin-B neuropeptides. Triggers an increase in cytoplasmic Ca(2+) levels in response to orexin-A binding. This is Orexin receptor type 2 (HCRTR2) from Canis lupus familiaris (Dog).